The following is a 236-amino-acid chain: Small ribosomal subunit protein uS2c (236 aa).

It belongs to the universal ribosomal protein uS2 family.

The protein localises to the plastid. Its subcellular location is the chloroplast. The sequence is that of Small ribosomal subunit protein uS2c (rps2) from Amborella trichopoda.